We begin with the raw amino-acid sequence, 351 residues long: UPF0104 membrane protein MTH_887 (351 aa).

Transmembrane regions (helical) follow at residues 20 to 40 (IVLS…FAGF), 51 to 71 (SPYF…LWTL), 137 to 157 (VFEF…IMTW), 165 to 185 (IVVS…VYAG), 244 to 264 (FVIG…RLYV), 275 to 295 (AVPL…PILP), 304 to 324 (ILVG…AASV), and 328 to 348 (IASY…YGKQ).

The protein belongs to the UPF0104 family.

The protein resides in the cell membrane. In Methanothermobacter thermautotrophicus (strain ATCC 29096 / DSM 1053 / JCM 10044 / NBRC 100330 / Delta H) (Methanobacterium thermoautotrophicum), this protein is UPF0104 membrane protein MTH_887.